The primary structure comprises 461 residues: MSTLNVPKETMSRKDPEKFFTIVEKLGEGSYGSVYKAINISTGIVVAIKKVSVDNDLEDMEKEISFMKQCKSPYIVTYYASFRKENEVWIVMEHCGAGSVCDAMKITDKTLSEDQIAVVSRDVLQGLAYLHSVRKIHRDIKAGNILMNHKGESKLADFGVSGQLSDTMAKRQTVIGTPFWMAPEVIQEIGYDYKADIWSYGITCIEMAESKPPLFNVHPMRVIFMIPNPSRPPPKLTEPEKWSPEFNDFLAKCLTRKPELRPSAEELLKHPFITKAKSHSLLVPLIDEQDIIINEKGREVALGIEQRDEEEEDEDEDSEDSDDNRGTMVRAKPRSMQNSGGEDNDEEYDTGTMVITDNKNSYDTVVFNNDDEDSGTMKLKNTMPSNKKNFVPDYMNQFKKSDDDVTNVPLSDKYSSYSLEELKKMLAELEIEREKEVQKTLEKFSINRQALLAVIDEKKSK.

The 254-residue stretch at 20 to 273 (FTIVEKLGEG…AEELLKHPFI (254 aa)) folds into the Protein kinase domain. ATP is bound by residues 26 to 34 (LGEGSYGSV) and Lys-49. Asp-139 functions as the Proton acceptor in the catalytic mechanism. Position 173 is a phosphothreonine; by autocatalysis (Thr-173). Disordered stretches follow at residues 303-349 (GIEQ…EEYD) and 369-388 (NDDE…SNKK). The segment covering 307–322 (RDEEEEDEDEDSEDSD) has biased composition (acidic residues). The region spanning 411–458 (SDKYSSYSLEELKKMLAELEIEREKEVQKTLEKFSINRQALLAVIDEK) is the SARAH domain.

Belongs to the protein kinase superfamily. STE Ser/Thr protein kinase family. STE20 subfamily. Mn(2+) serves as cofactor. Undergoes autophosphorylation in the catalytic domain.

Its subcellular location is the cytoplasm. It is found in the cytosol. It catalyses the reaction L-seryl-[protein] + ATP = O-phospho-L-seryl-[protein] + ADP + H(+). The enzyme catalyses L-threonyl-[protein] + ATP = O-phospho-L-threonyl-[protein] + ADP + H(+). In terms of biological role, regulates both cAMP signaling during early development and the stress response. Functions as an activator of adenylylcyclase. This chain is Serine/threonine-protein kinase 4 homolog A (krsA), found in Dictyostelium discoideum (Social amoeba).